A 354-amino-acid chain; its full sequence is Acyl-CoA-binding domain-containing protein 2 (354 aa).

Residues 11–31 (VILGLIFSYLLAKLISIVVTF) traverse the membrane as a helical; Signal-anchor segment. A disordered region spans residues 75–96 (AEQGSSRSDSVAGDDSEEDDDW). Acidic residues predominate over residues 86-96 (AGDDSEEDDDW). The ACB domain occupies 104 to 194 (LDEAFSAATL…VTQLYPTWLD (91 aa)). An acyl-CoA is bound by residues 136–140 (YGLYK), K162, and Y181. ANK repeat units lie at residues 265–294 (EGRTPLHWAIDRGHLNIAKVLVDKNADVNA) and 298–327 (EGQTPLHYAVVCDREAIAEFLVKQNANTAA).

It belongs to the ACBP family. As to quaternary structure, interacts (via ankyrin repeats) with HIPP26 and the ethylene-responsive element-binding proteins RAP2-3/EBP and RAP2-12. Interacts with CSE. In terms of tissue distribution, mostly expressed in roots and flowers, and, to a lower extent, in stems, pods and leaves (at protein level).

Its subcellular location is the cell membrane. The protein localises to the endoplasmic reticulum membrane. It is found in the peroxisome membrane. Functionally, binds medium- and long-chain acyl-CoA esters with very high affinity. Can interact in vitro with palmitoyl-CoA, but not with oleoyl-CoA. Binds to lead ions (Pb). May function as an intracellular carrier of acyl-CoA esters. Required for proper phospholipid and, to a lower extent, galactolipid composition. The chain is Acyl-CoA-binding domain-containing protein 2 (ACBP2) from Arabidopsis thaliana (Mouse-ear cress).